Reading from the N-terminus, the 405-residue chain is Prostaglandin E2 receptor EP1 subtype (405 aa).

The Extracellular segment spans residues 1 to 39 (MSPYGLNLSLVDEATTCVTPRVPNTSVVLPTGGNGTSPA). N-linked (GlcNAc...) asparagine glycans are attached at residues N7, N24, and N34. The helical transmembrane segment at 40–62 (LPIFSMTLGAVSNVLALALLAQV) threads the bilayer. Residues 63 to 80 (AGRLRRRRSTATFLLFVA) are Cytoplasmic-facing. The chain crosses the membrane as a helical span at residues 81–99 (SLLAIDLAGHVIPGALVLR). Residues 100-113 (LYTAGRAPAGGACH) are Extracellular-facing. A disulfide bridge connects residues C112 and C190. A helical membrane pass occupies residues 114-135 (FLGGCMVFFGLCPLLLGCGMAV). At 136 to 157 (ERCVGVTQPLIHAARVSVARAR) the chain is on the cytoplasmic side. The chain crosses the membrane as a helical span at residues 158–179 (LALALLAAMALAVALLPLVHVG). Residues 180 to 202 (HYELQYPGTWCFISLGPPGGWRQ) lie on the Extracellular side of the membrane. Residues 203 to 228 (ALLAGLFAGLGLAALLAALVCNTLSG) traverse the membrane as a helical segment. Over 229–301 (LALLRARWRR…HAHDVEMVGQ (73 aa)) the chain is Cytoplasmic. Residues 302 to 323 (LVGIMVVSCICWSPLLVLVVLA) form a helical membrane-spanning segment. At 324-337 (IGGWNSNSLQRPLF) the chain is on the extracellular side. The helical transmembrane segment at 338 to 357 (LAVRLASWNQILDPWVYILL) threads the bilayer. Residues 358–405 (RQAMLRQLLRLLPLRVSAKGGPTELSLTKSAWEASSLRSSRHSGFSHL) lie on the Cytoplasmic side of the membrane.

This sequence belongs to the G-protein coupled receptor 1 family. Post-translationally, phosphorylated. In terms of tissue distribution, highly abundant in kidney and lung. Found in a lesser extent in spleen, colon, and thymus. Also expressed in uterine myometrium and endometrium.

It is found in the cell membrane. In terms of biological role, receptor for prostaglandin E2 (PGE2). The activity of this receptor is mediated by G(q) proteins which activate a phosphatidylinositol-calcium second messenger system. May play a role as an important modulator of renal function. Implicated the smooth muscle contractile response to PGE2 in various tissues. Isoform 1 and isoform 2 have identical ligand binding properties, but isoform 2 lacks coupling to calcium mobilization and may therefore attenuate the action of PGE2 on tissues. This Rattus norvegicus (Rat) protein is Prostaglandin E2 receptor EP1 subtype (Ptger1).